The following is a 510-amino-acid chain: NAD(P)H-quinone oxidoreductase subunit 2 A, chloroplastic (510 aa).

A run of 14 helical transmembrane segments spans residues 31–51 (LIFP…IDLT), 57–77 (IPWL…ALLF), 99–119 (IFQF…VEYI), 124–144 (MAIT…MFLC), 149–169 (LITI…LSGY), 184–204 (LLMG…LYGL), 229–249 (ISIA…LAPF), 261–281 (PTPV…ALAT), 295–315 (WHLL…LIAI), 323–343 (MLAY…IVGD), 354–374 (YMLF…LFGL), 395–415 (ALSL…AGFF), 418–438 (LYLF…IGLL), and 484–504 (MIVC…IIAI).

The protein belongs to the complex I subunit 2 family. In terms of assembly, NDH is composed of at least 16 different subunits, 5 of which are encoded in the nucleus.

The protein localises to the plastid. It localises to the chloroplast thylakoid membrane. It carries out the reaction a plastoquinone + NADH + (n+1) H(+)(in) = a plastoquinol + NAD(+) + n H(+)(out). The catalysed reaction is a plastoquinone + NADPH + (n+1) H(+)(in) = a plastoquinol + NADP(+) + n H(+)(out). Its function is as follows. NDH shuttles electrons from NAD(P)H:plastoquinone, via FMN and iron-sulfur (Fe-S) centers, to quinones in the photosynthetic chain and possibly in a chloroplast respiratory chain. The immediate electron acceptor for the enzyme in this species is believed to be plastoquinone. Couples the redox reaction to proton translocation, and thus conserves the redox energy in a proton gradient. This chain is NAD(P)H-quinone oxidoreductase subunit 2 A, chloroplastic, found in Nicotiana tabacum (Common tobacco).